The following is a 275-amino-acid chain: Thymidylate synthase (275 aa).

138–139 is a binding site for dUMP; sequence RR. The Nucleophile role is filled by C158. DUMP is bound by residues 178 to 181, N189, and 219 to 221; these read RSCD and HIY. D181 serves as a coordination point for (6R)-5,10-methylene-5,6,7,8-tetrahydrofolate. Residue A274 participates in (6R)-5,10-methylene-5,6,7,8-tetrahydrofolate binding.

Belongs to the thymidylate synthase family. Bacterial-type ThyA subfamily. As to quaternary structure, homodimer.

The protein resides in the cytoplasm. It carries out the reaction dUMP + (6R)-5,10-methylene-5,6,7,8-tetrahydrofolate = 7,8-dihydrofolate + dTMP. It participates in pyrimidine metabolism; dTTP biosynthesis. Functionally, catalyzes the reductive methylation of 2'-deoxyuridine-5'-monophosphate (dUMP) to 2'-deoxythymidine-5'-monophosphate (dTMP) while utilizing 5,10-methylenetetrahydrofolate (mTHF) as the methyl donor and reductant in the reaction, yielding dihydrofolate (DHF) as a by-product. This enzymatic reaction provides an intracellular de novo source of dTMP, an essential precursor for DNA biosynthesis. This chain is Thymidylate synthase, found in Fusobacterium nucleatum subsp. nucleatum (strain ATCC 25586 / DSM 15643 / BCRC 10681 / CIP 101130 / JCM 8532 / KCTC 2640 / LMG 13131 / VPI 4355).